Here is a 644-residue protein sequence, read N- to C-terminus: Exoribonuclease 2 (644 aa).

Positions 189-516 (REDLTALDFV…NHRLLKAVIK (328 aa)) constitute an RNB domain. Positions 561–643 (GTRFAAEIVD…ETRGIIARPV (83 aa)) constitute an S1 motif domain.

The protein belongs to the RNR ribonuclease family. RNase II subfamily.

The protein localises to the cytoplasm. It carries out the reaction Exonucleolytic cleavage in the 3'- to 5'-direction to yield nucleoside 5'-phosphates.. Its function is as follows. Involved in mRNA degradation. Hydrolyzes single-stranded polyribonucleotides processively in the 3' to 5' direction. This is Exoribonuclease 2 from Shigella sonnei (strain Ss046).